A 142-amino-acid chain; its full sequence is MAKKVAGQLKLQVKAGSANPSPPIGPALGQRGINIMEFCKAFNAATQEMEKGMPIPVVITYFQDKSFTFVMKQPPVSYFLKREAKVQSGSKTPGKAKAGAISKAQIRTIAEAKMKDLNAADIEGAMAMVEGSARSMGLEVTG.

The protein belongs to the universal ribosomal protein uL11 family. In terms of assembly, part of the ribosomal stalk of the 50S ribosomal subunit. Interacts with L10 and the large rRNA to form the base of the stalk. L10 forms an elongated spine to which L12 dimers bind in a sequential fashion forming a multimeric L10(L12)X complex. In terms of processing, one or more lysine residues are methylated.

In terms of biological role, forms part of the ribosomal stalk which helps the ribosome interact with GTP-bound translation factors. The sequence is that of Large ribosomal subunit protein uL11 from Sinorhizobium medicae (strain WSM419) (Ensifer medicae).